The sequence spans 454 residues: uncharacterized protein (454 aa).

The N-terminal stretch at 1–18 (MRRFTLFVFFLSISIAYA) is a signal peptide.

This is an uncharacterized protein from Caenorhabditis elegans.